Consider the following 349-residue polypeptide: 2-oxoglutarate-Fe(II) type oxidoreductase hxnY (349 aa).

Residues 178-282 (GVATMRMLHY…RYSIPFFFSG (105 aa)) form the Fe2OG dioxygenase domain. The Fe cation site is built by His205, Asp207, and His263. Arg273 is a 2-oxoglutarate binding site.

The protein belongs to the iron/ascorbate-dependent oxidoreductase family. Requires Fe(2+) as cofactor.

Functionally, 2-oxoglutarate-Fe(II) type oxidoreductase, part of the hnx cluster involved in the purine degradation. The nicotinate hydroxylase hnxS accepts nicotinate as a substrate and catalyzes the first step of nicotinate catabolism. The major facilitator-type transporters hxnP and hxnZ are probably involved in the uptake of nicotinate-derived metabolites, and the oxidoreductases hxnT and hxnY in the further metabolism of 6-OH nicotinic acid. This chain is 2-oxoglutarate-Fe(II) type oxidoreductase hxnY, found in Emericella nidulans (strain FGSC A4 / ATCC 38163 / CBS 112.46 / NRRL 194 / M139) (Aspergillus nidulans).